Reading from the N-terminus, the 134-residue chain is UPF0412 protein YaaI (134 aa).

The first 23 residues, 1-23 (MKSVFTLSASLAISLMLCCTAQA), serve as a signal peptide directing secretion.

This sequence belongs to the UPF0412 family.

This chain is UPF0412 protein YaaI, found in Escherichia coli O17:K52:H18 (strain UMN026 / ExPEC).